Consider the following 551-residue polypeptide: MGVQTCAVAGRGVVAYLLAMTAAQNDRSASTPSVASAHDKILIVDFGSQVTQLIARRVREDGVYCEIVPFNKAEEAFKEMKPKAVILSGGPESVHEAGSPRAPQLIFASGVPVMGICYGQMTMAAQLGGEVEGGHHREFGRADVEVKAQSKLFEDVWSSGSKNQVWMSHGDRITKMPPGFSVAGTSPNAPFAIIQDEKRKYYGLMFHPEVVHTPDGAKLIRNFVRKIAGLTGDWTMRAFREEEIAKIRAQVGKGKVICGLSGGVDSAVAAVLIHEAIGDQLTCVFVDHGLMRLNEAEQVVDLFRHHYNIPLVHVDASKQFLGELEGVTDPETKRKTIGRLFIEVFEAEAKKIGGADFLAQGTLYPDVIESVSFTGGPSVTIKSHHNVGGLPERMNMKLVEPLRELFKDEVRKLGRELGLPEIFVGRHPFPGPGLAIRCPGDITSDKLDILRKADAVYIDQIRKHGLYDDIWQAFAVLLPVKTVGVMGDGRTYDYVVGLRAVTSTDGMTADFYQFDMKFLGETATRIINEVKGVNRVVYDVTSKPPGTIEWE.

The region spanning 40 to 233 is the Glutamine amidotransferase type-1 domain; that stretch reads KILIVDFGSQ…VRKIAGLTGD (194 aa). Cysteine 117 acts as the Nucleophile in catalysis. Catalysis depends on residues histidine 207 and glutamate 209. Positions 234 to 426 constitute a GMPS ATP-PPase domain; the sequence is WTMRAFREEE…LGLPEIFVGR (193 aa). 261 to 267 contributes to the ATP binding site; the sequence is SGGVDSA.

In terms of assembly, homodimer.

It carries out the reaction XMP + L-glutamine + ATP + H2O = GMP + L-glutamate + AMP + diphosphate + 2 H(+). It participates in purine metabolism; GMP biosynthesis; GMP from XMP (L-Gln route): step 1/1. Functionally, catalyzes the synthesis of GMP from XMP. The sequence is that of GMP synthase [glutamine-hydrolyzing] from Bradyrhizobium diazoefficiens (strain JCM 10833 / BCRC 13528 / IAM 13628 / NBRC 14792 / USDA 110).